We begin with the raw amino-acid sequence, 369 residues long: GTPase Obg (369 aa).

Positions 1–159 (MKFIDEAKIE…RELRLELKVL (159 aa)) constitute an Obg domain. The interval 128–148 (IHFKSSTNRAPRQKSEGKEGE) is disordered. The OBG-type G domain maps to 160-333 (ADIGLLGMPN…LVTEIYEYIA (174 aa)). GTP-binding positions include 166 to 173 (GMPNAGKS), 191 to 195 (FTTLH), 213 to 216 (DIPG), 283 to 286 (NKLD), and 314 to 316 (SAL). Serine 173 and threonine 193 together coordinate Mg(2+).

It belongs to the TRAFAC class OBG-HflX-like GTPase superfamily. OBG GTPase family. As to quaternary structure, monomer. The cofactor is Mg(2+).

The protein localises to the cytoplasm. Its function is as follows. An essential GTPase which binds GTP, GDP and possibly (p)ppGpp with moderate affinity, with high nucleotide exchange rates and a fairly low GTP hydrolysis rate. Plays a role in control of the cell cycle, stress response, ribosome biogenesis and in those bacteria that undergo differentiation, in morphogenesis control. In Janthinobacterium sp. (strain Marseille) (Minibacterium massiliensis), this protein is GTPase Obg.